The primary structure comprises 342 residues: S-adenosylmethionine:tRNA ribosyltransferase-isomerase (342 aa).

It belongs to the QueA family. In terms of assembly, monomer.

The protein localises to the cytoplasm. It catalyses the reaction 7-aminomethyl-7-carbaguanosine(34) in tRNA + S-adenosyl-L-methionine = epoxyqueuosine(34) in tRNA + adenine + L-methionine + 2 H(+). It functions in the pathway tRNA modification; tRNA-queuosine biosynthesis. Its function is as follows. Transfers and isomerizes the ribose moiety from AdoMet to the 7-aminomethyl group of 7-deazaguanine (preQ1-tRNA) to give epoxyqueuosine (oQ-tRNA). The chain is S-adenosylmethionine:tRNA ribosyltransferase-isomerase from Streptococcus pyogenes serotype M12 (strain MGAS2096).